Here is a 367-residue protein sequence, read N- to C-terminus: Aspartate-semialdehyde dehydrogenase (367 aa).

NADP(+)-binding positions include 10 to 13 (RGMV), 37 to 38 (TS), and Gln73. Residue Arg102 participates in phosphate binding. The Acyl-thioester intermediate role is filled by Cys135. S-cysteinyl cysteine; in inhibited form is present on Cys135. Gln162 is a binding site for substrate. Residues 165-169 (SGGGA), Arg173, and Pro193 each bind NADP(+). Glu241 serves as a coordination point for substrate. Lys244 is a binding site for phosphate. Position 267 (Arg267) interacts with substrate. Residue His274 is the Proton acceptor of the active site. Gln350 lines the NADP(+) pocket.

The protein belongs to the aspartate-semialdehyde dehydrogenase family. As to quaternary structure, homodimer.

It carries out the reaction L-aspartate 4-semialdehyde + phosphate + NADP(+) = 4-phospho-L-aspartate + NADPH + H(+). The protein operates within amino-acid biosynthesis; L-lysine biosynthesis via DAP pathway; (S)-tetrahydrodipicolinate from L-aspartate: step 2/4. Its pathway is amino-acid biosynthesis; L-methionine biosynthesis via de novo pathway; L-homoserine from L-aspartate: step 2/3. It participates in amino-acid biosynthesis; L-threonine biosynthesis; L-threonine from L-aspartate: step 2/5. Is inhibited by L- and D-cystine, and by other cystine derivatives, via the formation of a covalently bound cysteine at the active site Cys-135. Functionally, catalyzes the NADPH-dependent formation of L-aspartate-semialdehyde (L-ASA) by the reductive dephosphorylation of L-aspartyl-4-phosphate. The sequence is that of Aspartate-semialdehyde dehydrogenase from Escherichia coli (strain K12).